The sequence spans 270 residues: tRNA pseudouridine synthase A (270 aa).

D60 (nucleophile) is an active-site residue. The RNA binding stretch occupies residues 107-111 (FHARF). Y118 serves as a coordination point for substrate. The interval 168–172 (QCQSR) is interaction with tRNA.

Belongs to the tRNA pseudouridine synthase TruA family. In terms of assembly, homodimer.

The enzyme catalyses uridine(38/39/40) in tRNA = pseudouridine(38/39/40) in tRNA. In terms of biological role, formation of pseudouridine at positions 38, 39 and 40 in the anticodon stem and loop of transfer RNAs. In Klebsiella pneumoniae (strain 342), this protein is tRNA pseudouridine synthase A.